A 239-amino-acid chain; its full sequence is Orotidine 5'-phosphate decarboxylase (239 aa).

Residues Asp-15, Lys-36, Asp-63–Thr-72, Thr-127, Arg-189, Gln-198, Gly-218, and Arg-219 each bind substrate. The active-site Proton donor is Lys-65.

This sequence belongs to the OMP decarboxylase family. Type 1 subfamily. Homodimer.

It carries out the reaction orotidine 5'-phosphate + H(+) = UMP + CO2. Its pathway is pyrimidine metabolism; UMP biosynthesis via de novo pathway; UMP from orotate: step 2/2. In terms of biological role, catalyzes the decarboxylation of orotidine 5'-monophosphate (OMP) to uridine 5'-monophosphate (UMP). The polypeptide is Orotidine 5'-phosphate decarboxylase (Prochlorococcus marinus (strain MIT 9515)).